The following is a 98-amino-acid chain: NADH-ubiquinone oxidoreductase chain 4L (98 aa).

3 helical membrane passes run 1 to 21 (MSMV…GLLM), 29 to 49 (SLLC…MTIL), and 61 to 81 (IILL…LVMV).

It belongs to the complex I subunit 4L family. In terms of assembly, core subunit of respiratory chain NADH dehydrogenase (Complex I) which is composed of 45 different subunits.

It is found in the mitochondrion inner membrane. The enzyme catalyses a ubiquinone + NADH + 5 H(+)(in) = a ubiquinol + NAD(+) + 4 H(+)(out). In terms of biological role, core subunit of the mitochondrial membrane respiratory chain NADH dehydrogenase (Complex I) which catalyzes electron transfer from NADH through the respiratory chain, using ubiquinone as an electron acceptor. Part of the enzyme membrane arm which is embedded in the lipid bilayer and involved in proton translocation. The polypeptide is NADH-ubiquinone oxidoreductase chain 4L (MT-ND4L) (Otaria byronia (South American sea lion)).